The sequence spans 348 residues: NADH-quinone oxidoreductase subunit H 1 (348 aa).

Helical transmembrane passes span 11 to 31 (IYYI…LLTV), 83 to 103 (FAFL…FAVI), 136 to 156 (VGVL…VLAG), 172 to 192 (SAQM…VFML), 208 to 228 (GAWY…CSLA), 268 to 288 (MVTV…GPAF), 289 to 309 (LPGW…CMWI), and 324 to 344 (LGWK…GIVV).

This sequence belongs to the complex I subunit 1 family. NDH-1 is composed of 14 different subunits. Subunits NuoA, H, J, K, L, M, N constitute the membrane sector of the complex.

The protein localises to the cell inner membrane. The enzyme catalyses a quinone + NADH + 5 H(+)(in) = a quinol + NAD(+) + 4 H(+)(out). Its function is as follows. NDH-1 shuttles electrons from NADH, via FMN and iron-sulfur (Fe-S) centers, to quinones in the respiratory chain. The immediate electron acceptor for the enzyme in this species is believed to be ubiquinone. Couples the redox reaction to proton translocation (for every two electrons transferred, four hydrogen ions are translocated across the cytoplasmic membrane), and thus conserves the redox energy in a proton gradient. This subunit may bind ubiquinone. The sequence is that of NADH-quinone oxidoreductase subunit H 1 from Geobacter sulfurreducens (strain ATCC 51573 / DSM 12127 / PCA).